Reading from the N-terminus, the 260-residue chain is Adenosylcobinamide-GDP ribazoletransferase (260 aa).

Helical transmembrane passes span 40–60 (AFPFAGLLIGFVPAVTLLLLL), 64–84 (TDPLVAALVALSVQALVTGAL), 117–137 (YGAIALILSFAIRAAALAAII), 142–162 (PLAAALAIPAVAALSRGAIAW), 188–208 (HFALVSAGLLAALLIWPPFGL), and 210–230 (PLVAGLLVAGVAGFAFTVFIR).

It belongs to the CobS family. It depends on Mg(2+) as a cofactor.

The protein localises to the cell inner membrane. It carries out the reaction alpha-ribazole + adenosylcob(III)inamide-GDP = adenosylcob(III)alamin + GMP + H(+). It catalyses the reaction alpha-ribazole 5'-phosphate + adenosylcob(III)inamide-GDP = adenosylcob(III)alamin 5'-phosphate + GMP + H(+). It participates in cofactor biosynthesis; adenosylcobalamin biosynthesis; adenosylcobalamin from cob(II)yrinate a,c-diamide: step 7/7. Functionally, joins adenosylcobinamide-GDP and alpha-ribazole to generate adenosylcobalamin (Ado-cobalamin). Also synthesizes adenosylcobalamin 5'-phosphate from adenosylcobinamide-GDP and alpha-ribazole 5'-phosphate. The polypeptide is Adenosylcobinamide-GDP ribazoletransferase (Rhizobium etli (strain ATCC 51251 / DSM 11541 / JCM 21823 / NBRC 15573 / CFN 42)).